A 178-amino-acid polypeptide reads, in one-letter code: Crossover junction endodeoxyribonuclease RuvC (178 aa).

Residues aspartate 11, glutamate 71, and aspartate 143 contribute to the active site. Residues aspartate 11, glutamate 71, and aspartate 143 each coordinate Mg(2+).

This sequence belongs to the RuvC family. As to quaternary structure, homodimer which binds Holliday junction (HJ) DNA. The HJ becomes 2-fold symmetrical on binding to RuvC with unstacked arms; it has a different conformation from HJ DNA in complex with RuvA. In the full resolvosome a probable DNA-RuvA(4)-RuvB(12)-RuvC(2) complex forms which resolves the HJ. Mg(2+) is required as a cofactor.

The protein localises to the cytoplasm. It carries out the reaction Endonucleolytic cleavage at a junction such as a reciprocal single-stranded crossover between two homologous DNA duplexes (Holliday junction).. The RuvA-RuvB-RuvC complex processes Holliday junction (HJ) DNA during genetic recombination and DNA repair. Endonuclease that resolves HJ intermediates. Cleaves cruciform DNA by making single-stranded nicks across the HJ at symmetrical positions within the homologous arms, yielding a 5'-phosphate and a 3'-hydroxyl group; requires a central core of homology in the junction. The consensus cleavage sequence is 5'-(A/T)TT(C/G)-3'. Cleavage occurs on the 3'-side of the TT dinucleotide at the point of strand exchange. HJ branch migration catalyzed by RuvA-RuvB allows RuvC to scan DNA until it finds its consensus sequence, where it cleaves and resolves the cruciform DNA. The polypeptide is Crossover junction endodeoxyribonuclease RuvC (Neisseria meningitidis serogroup C / serotype 2a (strain ATCC 700532 / DSM 15464 / FAM18)).